A 450-amino-acid polypeptide reads, in one-letter code: MNDTIAAVATPLGKGAISIVKISGNNALNILKQLTKKQDFTPRYAYVCDIFSNNILLDKALAIYFKAPYSFTGEDVCEIQCHGSPLLTQNILQACLNLGARLAQAGEFSKKAFLNHKMDLSEIEASIRLILCEDESVLNALARQLKGELKIFIEEARNNLLKLLASSEVLIDYSEEDIPSDFLNEVSLSLEKQIASFKDLLDFSNMQKQKNKGHALSIIGKPNAGKSSLLNAMLLEERALVSDIKGTTRDTIEEVIELQGHKVRLIDTAGIRESVDKIERLGIEKSLKSLENCDIILSVFDLSKPLEKEDFNIIDALNRTKKPCIVVLNKNDLSPKLELEVLKSHLQIPYSMLETNTLNSKACLKDLSQKISAFFPKLDTQNKLLLTSLAQKNALENAITELQNAKNHLETLELFSYHILSAIENLNLLTRPYETSQMLDSMFSEFCLGK.

Positions 21, 78, and 117 each coordinate (6S)-5-formyl-5,6,7,8-tetrahydrofolate. The TrmE-type G domain occupies 213-376 (GHALSIIGKP…LSQKISAFFP (164 aa)). A K(+)-binding site is contributed by Asn-223. Residues 223–228 (NAGKSS), 242–248 (SDIKGTT), and 267–270 (DTAG) contribute to the GTP site. A Mg(2+)-binding site is contributed by Ser-227. K(+)-binding residues include Ser-242, Ile-244, and Thr-247. Residue Thr-248 coordinates Mg(2+). A (6S)-5-formyl-5,6,7,8-tetrahydrofolate-binding site is contributed by Lys-450.

This sequence belongs to the TRAFAC class TrmE-Era-EngA-EngB-Septin-like GTPase superfamily. TrmE GTPase family. As to quaternary structure, homodimer. Heterotetramer of two MnmE and two MnmG subunits. The cofactor is K(+).

The protein localises to the cytoplasm. Its function is as follows. Exhibits a very high intrinsic GTPase hydrolysis rate. Involved in the addition of a carboxymethylaminomethyl (cmnm) group at the wobble position (U34) of certain tRNAs, forming tRNA-cmnm(5)s(2)U34. This is tRNA modification GTPase MnmE from Helicobacter acinonychis (strain Sheeba).